A 108-amino-acid polypeptide reads, in one-letter code: MKIIFYASREEQGFYGEAEIEEVEFFENPMKILEKYKNNLFLTEEEFKKYIEDSNKKWGYGKKKKKPWIVIILKNIRKYPKVVKPKRFIPVCGKYVKEDEYEQILKKL.

This is an uncharacterized protein from Methanocaldococcus jannaschii (strain ATCC 43067 / DSM 2661 / JAL-1 / JCM 10045 / NBRC 100440) (Methanococcus jannaschii).